A 158-amino-acid chain; its full sequence is MTDALTRIYVDADACPVKDEVYKVAERHHLPVTLVAGGFIRVPQHPLIERVAAGSGMDAADDWIAERIKPGDIVVTADIPLASRCVKAGATAIAPNGKPFTEESIGMTLAVRNLMTDLRSTGEITGGPRAFSPRDRSTFLSALDSAIRRIARRRAAPT.

It belongs to the UPF0178 family.

This Rhodopseudomonas palustris (strain ATCC BAA-98 / CGA009) protein is UPF0178 protein RPA2191.